The sequence spans 422 residues: Vitellogenin-2 (422 aa).

The N-terminal stretch at 1-20 is a signal peptide; it reads MNPLTIFCLVAVLLSAATAH. Disordered stretches follow at residues 161–191 and 399–422; these read QGEQGDDSNQDTSSSEESSNRPNGQQPKPNG and FGKSAPAQKQNSYHGIHQGAGRPN. Over residues 180-189 the composition is skewed to polar residues; sequence NRPNGQQPKP.

Belongs to the AB hydrolase superfamily. Lipase family. As to expression, synthesized in the fat body and ovarian follicle cells and accumulate in the oocyte.

The protein localises to the secreted. Vitellogenin is the major yolk protein of eggs where it is used as a food source during embryogenesis. The polypeptide is Vitellogenin-2 (VG2-delta) (Ceratitis capitata (Mediterranean fruit fly)).